A 189-amino-acid polypeptide reads, in one-letter code: DAN domain family member 5 (189 aa).

An N-terminal signal peptide occupies residues 1–22 (MLLGQLSTLLCLLSGALPTGSG). Asn-38 carries N-linked (GlcNAc...) asparagine glycosylation. Cystine bridges form between Cys-101-Cys-148, Cys-115-Cys-162, Cys-125-Cys-183, and Cys-129-Cys-185. Residues 101 to 186 (CKAVPFVQVF…TMLIEGCHCS (86 aa)) enclose the CTCK domain.

It belongs to the DAN family. As to expression, expressed in the retina, in inner segments of photoreceptors, at or close to the outer plexiform layer and in the ganglion cell layer (at protein level).

The protein resides in the secreted. Functionally, antagonist of the extracellular signaling protein NODAL, which is required for correct left-right patterning during embryonic development. Antagonist of BMP and TGF-beta signaling. Independently of its role in left-right axis establishment, plays a role during heart development, possibly through the regulation of TGF-beta/Nodal signaling pathway. Displays anti-angiogenic activity by inhibiting endothelial sprouting, migration, and proliferation. Once internalized by endothelial cells, may alter their redox and glycolytic balance. This chain is DAN domain family member 5 (DAND5), found in Homo sapiens (Human).